Consider the following 526-residue polypeptide: Phosphoenolpyruvate carboxylase (526 aa).

The protein belongs to the PEPCase type 2 family. Homotetramer. Mg(2+) serves as cofactor.

The enzyme catalyses oxaloacetate + phosphate = phosphoenolpyruvate + hydrogencarbonate. Its function is as follows. Catalyzes the irreversible beta-carboxylation of phosphoenolpyruvate (PEP) to form oxaloacetate (OAA), a four-carbon dicarboxylic acid source for the tricarboxylic acid cycle. The protein is Phosphoenolpyruvate carboxylase of Methanosarcina acetivorans (strain ATCC 35395 / DSM 2834 / JCM 12185 / C2A).